The chain runs to 69 residues: Pantinin-1 (69 aa).

The first 23 residues, Met1 to Gly23, serve as a signal peptide directing secretion. Val37 carries the post-translational modification Valine amide. Positions Gly41–Lys69 are excised as a propeptide.

The protein belongs to the non-disulfide-bridged peptide (NDBP) superfamily. Short antimicrobial peptide (group 4) family. As to expression, expressed by the venom gland.

It is found in the secreted. Its subcellular location is the target cell membrane. In terms of biological role, amphipathic peptide that possesses relatively strong activities against Gram-positive bacteria and a fungus, but has very weak antimicrobial activities against Gram-negative bacteria. Also exhibits very low hemolytic activities against human erythrocytes (64 uM induce 21% of hemolysis). Minimal inhibitory concentration (MIC) are the following: 8 uM against S.aureus, 32 uM against B.magaterium, 32 uM against M.luteus, 28 uM against vancomycin-resistant Enterococci, 14 uM against methicillin-resistant S.aureus, 62 uM against E.coli, &gt;87 uM against P.putida, &gt;87 uM against K.oxytoca, 76 uM against E.cloacae, 72 uM against S.enterica and 16 uM against the fungus C.tropicalis. The protein is Pantinin-1 of Pandinus imperator (Emperor scorpion).